The chain runs to 281 residues: CCAAT/enhancer-binding protein epsilon (281 aa).

Positions 1-30 (MSHGTYYECEPRGGQQPLEFSGGRAGPGEL) are disordered. Lys-121 is covalently cross-linked (Glycyl lysine isopeptide (Lys-Gly) (interchain with G-Cter in SUMO2)). Ser-181 is modified (phosphoserine). In terms of domain architecture, bZIP spans 204-267 (SLEYRLRRER…DTLRNLFRQI (64 aa)). The segment at 208-245 (RLRRERNNIAVRKSRDKAKRRIMETQQKVLEYMAENER) is basic motif. Residues 246 to 267 (LRNRVDQLTQELDTLRNLFRQI) are leucine-zipper.

This sequence belongs to the bZIP family. C/EBP subfamily. As to quaternary structure, binds DNA as a homodimer and as a heterodimer. Can form stable heterodimers with CEBPA, CEBPB and CEBPD. Interacts with GATA1 and SPI1. Interacts with SMARCD2. Post-translationally, phosphorylated.

Its subcellular location is the nucleus. Functionally, transcriptional activator. C/EBP are DNA-binding proteins that recognize two different motifs: the CCAAT homology common to many promoters and the enhanced core homology common to many enhancers. Required for the promyelocyte-myelocyte transition in myeloid differentiation. This is CCAAT/enhancer-binding protein epsilon (Cebpe) from Mus musculus (Mouse).